The chain runs to 117 residues: uncharacterized protein (117 aa).

This is an uncharacterized protein from Sinorhizobium fredii (strain NBRC 101917 / NGR234).